A 166-amino-acid polypeptide reads, in one-letter code: Monodehydroascorbate reductase, fruit isozyme (166 aa).

This sequence belongs to the FAD-dependent oxidoreductase family. FAD serves as cofactor. In terms of processing, the N-terminus is blocked.

It catalyses the reaction 2 monodehydro-L-ascorbate radical + NADH + H(+) = 2 L-ascorbate + NAD(+). Its function is as follows. Catalyzes the conversion of monodehydroascorbate to ascorbate, oxidizing NADH in the process. The protein is Monodehydroascorbate reductase, fruit isozyme of Cucumis sativus (Cucumber).